Reading from the N-terminus, the 490-residue chain is Metalloreductase STEAP2 (490 aa).

Residues 38–41 (SGDF), 60–61 (SR), 93–100 (IHREHYTS), N118, and A151 contribute to the NADP(+) site. Residues W152 and D160 each contribute to the FAD site. Residues 208-228 (LFTLWRGPVVVAISLATFFFL) traverse the membrane as a helical segment. Y229 is a Fe(3+) binding site. The helical transmembrane segment at 259-279 (LPIVAITLLSLVYLAGLLAAA) threads the bilayer. The 149-residue stretch at 259–407 (LPIVAITLLS…LGYVALLIST (149 aa)) folds into the Ferric oxidoreductase domain. Positions 281 and 302 each coordinate FAD. A run of 4 helical transmembrane segments spans residues 305-325 (LGLL…CLPM), 359-379 (MYIS…VTSI), 393-413 (FIQS…VLIY), and 432-452 (FVLA…LFLP). A heme b-binding site is contributed by H316. A Fe(3+)-binding site is contributed by Y319. Residues S378 and Q395 each coordinate FAD. Heme b is bound at residue H409. The residue at position 483 (S483) is a Phosphoserine.

It belongs to the STEAP family. The cofactor is FAD. It depends on heme b as a cofactor. Expressed at high levels in prostate and at significantly lower levels in heart, brain, kidney, pancreas, and ovary.

The protein localises to the endosome membrane. It localises to the cell membrane. The catalysed reaction is 2 Fe(2+) + NADP(+) + H(+) = 2 Fe(3+) + NADPH. The enzyme catalyses 2 Cu(+) + NADP(+) + H(+) = 2 Cu(2+) + NADPH. Functionally, integral membrane protein that functions as a NADPH-dependent ferric-chelate reductase, using NADPH from one side of the membrane to reduce a Fe(3+) chelate that is bound on the other side of the membrane. Mediates sequential transmembrane electron transfer from NADPH to FAD and onto heme, and finally to the Fe(3+) chelate. Can also reduce Cu(2+) to Cu(1+). This chain is Metalloreductase STEAP2 (STEAP2), found in Homo sapiens (Human).